Reading from the N-terminus, the 356-residue chain is MLPSTLQALTKKVLATQLISEDDYYTLKCCGLWWHEAPLMLCYDKNHQMLVKTPILKEGLLLNTALMKAVQENNYELIMLFTEWGANINYGLLSVNMEHTRNLCRKLGAKEGLEASEILQFFFKTKRHKTSSNIILCHELFSNNLLLQNVDMEELKMIIYWDLKDLTDNIILDDNTSLSEMLTKYWYGIAVRYKLKEAIQYFYQEYEQLNEWRLNCALSFNNVFDLHEIHNTGKVYMDIDEMMRLACIRDNNFLTIYYCFALGADINQAMFTSILNYNVFNMFFCMDLGANAIEESKALAEQKNYHLIVNMLSFKNYSPDPFLISKIIDPKKINTMLKSYYSKNMSTFDYMCIGYF.

The stretch at 61–93 (LLNTALMKAVQENNYELIMLFTEWGANINYGLL) is one ANK repeat.

Belongs to the asfivirus MGF 360 family.

Plays a role in virus cell tropism, and may be required for efficient virus replication in macrophages. In African swine fever virus (isolate Pig/Kenya/KEN-50/1950) (ASFV), this protein is Protein MGF 360-19R.